The sequence spans 210 residues: Isochorismatase domain-containing protein 2B (210 aa).

An N6-succinyllysine modification is found at lysine 178.

Belongs to the isochorismatase family. Interacts with CDKN2A. Ubiquitous. Expressed predominantly in uterus, stomach and urinary tract.

It is found in the cytoplasm. It localises to the nucleus. In Mus musculus (Mouse), this protein is Isochorismatase domain-containing protein 2B (Isoc2b).